The following is a 188-amino-acid chain: Putative manganese efflux pump MntP (188 aa).

6 helical membrane passes run 3-23 (ITATVLLAFGMSMDAFAASIG), 41-61 (LIFGAVETLTPLIGWGLGMLA), 66-86 (LEWNHWVAFILLVFLGIRMII), 107-129 (LLVTTAIATSLDAMAVGVGLAFL), 143-163 (ATLIMSTLGIMVGRFIGPLLG), and 168-188 (ILGGAVLIGIGAQILWTHFHG).

Belongs to the MntP (TC 9.B.29) family.

It localises to the cell inner membrane. Probably functions as a manganese efflux pump. This chain is Putative manganese efflux pump MntP, found in Citrobacter koseri (strain ATCC BAA-895 / CDC 4225-83 / SGSC4696).